The chain runs to 680 residues: DNA ligase (680 aa).

Residues 35–39 (DADFD), 86–87 (SL), and glutamate 111 each bind NAD(+). The N6-AMP-lysine intermediate role is filled by lysine 113. Residues arginine 134, glutamate 174, lysine 290, and lysine 314 each coordinate NAD(+). Zn(2+) is bound by residues cysteine 408, cysteine 411, cysteine 427, and cysteine 433. Positions 597 to 680 (VAEQTLEGLT…RLLNTGSADE (84 aa)) constitute a BRCT domain.

The protein belongs to the NAD-dependent DNA ligase family. LigA subfamily. Mg(2+) serves as cofactor. Mn(2+) is required as a cofactor.

It carries out the reaction NAD(+) + (deoxyribonucleotide)n-3'-hydroxyl + 5'-phospho-(deoxyribonucleotide)m = (deoxyribonucleotide)n+m + AMP + beta-nicotinamide D-nucleotide.. Its function is as follows. DNA ligase that catalyzes the formation of phosphodiester linkages between 5'-phosphoryl and 3'-hydroxyl groups in double-stranded DNA using NAD as a coenzyme and as the energy source for the reaction. It is essential for DNA replication and repair of damaged DNA. This Corynebacterium glutamicum (strain R) protein is DNA ligase.